Consider the following 353-residue polypeptide: Protein-arginine kinase (353 aa).

The Phosphagen kinase C-terminal domain maps to 24–256 (IVLSSRIRLA…RTVIDTEEQA (233 aa)). Residues 27-31 (SSRIR), H93, R127, 178-182 (RASVM), and 209-214 (RGLYGE) contribute to the ATP site. The RDXXRA motif of the pArg binding pocket involved in allosteric regulation signature appears at 339–344 (RDVRRA).

It belongs to the ATP:guanido phosphotransferase family.

It carries out the reaction L-arginyl-[protein] + ATP = N(omega)-phospho-L-arginyl-[protein] + ADP + H(+). With respect to regulation, appears to be allosterically activated by the binding of pArg-containing polypeptides to the pArg-binding pocket localized in the C-terminal domain of McsB. In terms of biological role, catalyzes the specific phosphorylation of arginine residues in proteins. This is Protein-arginine kinase from Symbiobacterium thermophilum (strain DSM 24528 / JCM 14929 / IAM 14863 / T).